Here is a 297-residue protein sequence, read N- to C-terminus: tRNA pseudouridine synthase B (297 aa).

Aspartate 44 functions as the Nucleophile in the catalytic mechanism.

It belongs to the pseudouridine synthase TruB family. Type 1 subfamily.

It catalyses the reaction uridine(55) in tRNA = pseudouridine(55) in tRNA. Its function is as follows. Responsible for synthesis of pseudouridine from uracil-55 in the psi GC loop of transfer RNAs. This chain is tRNA pseudouridine synthase B, found in Corynebacterium aurimucosum (strain ATCC 700975 / DSM 44827 / CIP 107346 / CN-1) (Corynebacterium nigricans).